The following is a 1788-amino-acid chain: Glutamine and serine-rich protein 1 (1788 aa).

Residues 1–53 are compositionally biased toward low complexity; it reads MDAHYAPAGFAEPPAPPASAATQPAAPAWAYEARVPAAASSPSCSGSSPSLKA. Disordered regions lie at residues 1 to 69, 472 to 498, and 532 to 617; these read MDAH…DVLQ, TRDL…VSQT, and SYSS…SKQD. Polar residues-rich tracts occupy residues 60 to 69, 478 to 492, 532 to 569, and 576 to 594; these read PSQSESDVLQ, VSES…SQGL, SYSS…SAQP, and VQSS…SSIP. Phosphoserine occurs at positions 670 and 940. Thr-1003 is modified (phosphothreonine). Ser-1041 carries the phosphoserine modification. Disordered regions lie at residues 1104–1163 and 1234–1264; these read QPGD…TDVY and IQTT…VSLS. Lys-1112 is covalently cross-linked (Glycyl lysine isopeptide (Lys-Gly) (interchain with G-Cter in SUMO2)). Residues 1126–1136 are compositionally biased toward basic and acidic residues; sequence PKEKAKGKEQG. Lys-1137 is covalently cross-linked (Glycyl lysine isopeptide (Lys-Gly) (interchain with G-Cter in SUMO2)). Phosphoserine occurs at positions 1262, 1281, and 1282. Thr-1394 is modified (phosphothreonine). A Phosphoserine modification is found at Ser-1401. Positions 1494-1588 are disordered; that stretch reads VCSKKPRNKP…DEGFEPPAPS (95 aa). Residues 1510–1537 show a composition bias toward low complexity; that stretch reads IPSKPSSISKTSDPPVSKTTTTKTPSTK. The span at 1545–1561 shows a compositional bias: basic and acidic residues; sequence IKAEPPPKKRKKWKEEF. Positions 1562 to 1575 are enriched in low complexity; it reads SSSQSESSPEVRSS.

In terms of assembly, interacts with TET1.

Its subcellular location is the chromosome. Plays an essential role in the protection and maintenance of transcriptional and developmental programs. Protects many bivalent promoters and poised enhancers from hypermethylation, showing a marked preference for these regulatory elements over other types of promoters or enhancers. Mechanistically, cooperates with TET1 and binds to DNA in a common complex to inhibit the binding of DNMT3A/3B and therefore de novo methylation. This is Glutamine and serine-rich protein 1 from Mus musculus (Mouse).